Here is a 355-residue protein sequence, read N- to C-terminus: MDKKNGLTYAEAGVDIDAGNALVETIKPFVRATRRAGADAELGGFGGLFDLKAAGFQDPILVAANDGVGSKVKLAIETGQHDTIGVDLVAMCVNDLIVQGAEPLFFLDYYATGKLEPATAASVVKGIADGCREAGCALIGGETAEMPGLYTGKDYDLAGFAVGAVERGHLLPRTDIAAGDLLLGLPSSGLHSNGFSLVRRVLADNGASLDGPAPYEPGKTLGESLLTPTRIYVRPLLHVFAATQAVKALAHITGGGFQENLPRVLPAGFGLALDLSALAVPPVFGWLAREGGIAETEMLRTFNCGIGMVLIVANDEASKVEEALRAAGEQPIRLGSVIPAPETGPRVTFQGQLSL.

This sequence belongs to the AIR synthase family.

The protein localises to the cytoplasm. It carries out the reaction 2-formamido-N(1)-(5-O-phospho-beta-D-ribosyl)acetamidine + ATP = 5-amino-1-(5-phospho-beta-D-ribosyl)imidazole + ADP + phosphate + H(+). Its pathway is purine metabolism; IMP biosynthesis via de novo pathway; 5-amino-1-(5-phospho-D-ribosyl)imidazole from N(2)-formyl-N(1)-(5-phospho-D-ribosyl)glycinamide: step 2/2. In Beijerinckia indica subsp. indica (strain ATCC 9039 / DSM 1715 / NCIMB 8712), this protein is Phosphoribosylformylglycinamidine cyclo-ligase.